We begin with the raw amino-acid sequence, 192 residues long: MNGIRLFVGLGNPGAQYEDTRHNAGFWWIDQLCAQTASKTTLEAKFFGLSGRLNGHADTWLLKPTTFMNASGRAVAALARFYKIPAEQILVVHDELDLPPGAARLKKGGGHSGHNGLKDIAAQLGTNDFWRLRLGIGHPGDRSAVVNYVLNAPLRDEMQQIAYAMDDSMLVLPQLLEGKFEEAMLKLHTKTK.

A tRNA-binding site is contributed by Tyr17. Residue His22 is the Proton acceptor of the active site. TRNA is bound by residues Phe67, Asn69, and Asn115.

This sequence belongs to the PTH family. As to quaternary structure, monomer.

Its subcellular location is the cytoplasm. The enzyme catalyses an N-acyl-L-alpha-aminoacyl-tRNA + H2O = an N-acyl-L-amino acid + a tRNA + H(+). Its function is as follows. Hydrolyzes ribosome-free peptidyl-tRNAs (with 1 or more amino acids incorporated), which drop off the ribosome during protein synthesis, or as a result of ribosome stalling. Functionally, catalyzes the release of premature peptidyl moieties from peptidyl-tRNA molecules trapped in stalled 50S ribosomal subunits, and thus maintains levels of free tRNAs and 50S ribosomes. This chain is Peptidyl-tRNA hydrolase, found in Methylobacillus flagellatus (strain ATCC 51484 / DSM 6875 / VKM B-1610 / KT).